Reading from the N-terminus, the 84-residue chain is RNA-binding protein Hfq (84 aa).

The Sm domain maps to 10 to 69; it reads DPFLNILRKERIPVSIYLVNGIKLQGQIDSFDQYVVLLKNSVTQMVYKHAISTIVPAKAI.

This sequence belongs to the Hfq family. As to quaternary structure, homohexamer.

RNA chaperone that binds small regulatory RNA (sRNAs) and mRNAs to facilitate mRNA translational regulation in response to envelope stress, environmental stress and changes in metabolite concentrations. Also binds with high specificity to tRNAs. This chain is RNA-binding protein Hfq, found in Nitrosomonas europaea (strain ATCC 19718 / CIP 103999 / KCTC 2705 / NBRC 14298).